The primary structure comprises 794 residues: Protein IQ-DOMAIN 32 (794 aa).

Residues 15-101 are disordered; the sequence is CSGGDDTSAD…QSFSVDEKKS (87 aa). Polar residues-rich tracts occupy residues 23 to 33 and 56 to 65; these read ADPNSTALENK and SVVSETTPAS. Phosphoserine is present on residues S78, S80, S142, S193, and S195. Residues 80–95 show a composition bias toward polar residues; that stretch reads SPDNNNVSEKQQQSFS. IQ domains are found at residues 214-242 and 243-265; these read DESV…KVIK and LQAA…CVQA. Residues 230-241 form a calmodulin-binding region; sequence ARRELLRSKKVI. The segment at 277-296 is disordered; sequence HSTKDGSRVSATSDKSEPNA. Phosphoserine is present on S369. Residues 375-417 form a disordered region; the sequence is VNSDSTVENKTETDMPSYEASKVEGQNVELSETEKMSQYDSPE. At S459 the chain carries Phosphoserine. Disordered stretches follow at residues 472–555 and 578–794; these read ELTS…RVEA and ATSM…KWQR. Over residues 473-486 the composition is skewed to polar residues; the sequence is LTSSTGSNKAMTLS. Positions 487-500 are enriched in basic and acidic residues; sequence SKDDVLGEEGKTDI. Phosphoserine occurs at positions 502 and 544. Basic and acidic residues-rich tracts occupy residues 539-555 and 585-607; these read TLEK…RVEA and EDPK…HHEP. Residues 643–654 are compositionally biased toward low complexity; it reads SQATPASQASSS. The short motif at 657–664 is the Nuclear localization signal element; the sequence is ARKGKSEK. Positions 768 to 786 are enriched in polar residues; sequence NGKQVSPRIQRSASQAQQG.

The protein belongs to the IQD family. In terms of assembly, binds to multiple calmodulin (CaM) in the presence of Ca(2+) and CaM-like proteins.

Its subcellular location is the nucleus. The protein localises to the cytoplasm. It is found in the cytoskeleton. Functionally, may be involved in cooperative interactions with calmodulins or calmodulin-like proteins. Recruits calmodulin proteins to microtubules, thus being a potential scaffold in cellular signaling and trafficking. May associate with nucleic acids and regulate gene expression at the transcriptional or post-transcriptional level. The polypeptide is Protein IQ-DOMAIN 32 (Arabidopsis thaliana (Mouse-ear cress)).